A 292-amino-acid polypeptide reads, in one-letter code: tRNA (guanine-N(7)-)-methyltransferase (292 aa).

Residues 1 to 54 are disordered; sequence MLKRDQSEMDIEAETANMGKEEKESFVHKRQKYRQEQEEKRLAAKKGVSFEQPE. The span at 19–42 shows a compositional bias: basic and acidic residues; that stretch reads GKEEKESFVHKRQKYRQEQEEKRL. Residues Gly110, 133 to 134, 168 to 169, and Cys188 contribute to the S-adenosyl-L-methionine site; these read EI and NA. Residue Asp191 is part of the active site. 266-268 lines the S-adenosyl-L-methionine pocket; sequence TEE.

Belongs to the class I-like SAM-binding methyltransferase superfamily. TrmB family. Forms a complex with TRM82.

Its subcellular location is the nucleus. The catalysed reaction is guanosine(46) in tRNA + S-adenosyl-L-methionine = N(7)-methylguanosine(46) in tRNA + S-adenosyl-L-homocysteine. Its pathway is tRNA modification; N(7)-methylguanine-tRNA biosynthesis. In terms of biological role, catalyzes the formation of N(7)-methylguanine at position 46 (m7G46) in tRNA. This chain is tRNA (guanine-N(7)-)-methyltransferase, found in Yarrowia lipolytica (strain CLIB 122 / E 150) (Yeast).